The chain runs to 368 residues: DNA replication and repair protein RecF (368 aa).

30–37 (GKNGTGKT) provides a ligand contact to ATP.

Belongs to the RecF family.

It is found in the cytoplasm. The RecF protein is involved in DNA metabolism; it is required for DNA replication and normal SOS inducibility. RecF binds preferentially to single-stranded, linear DNA. It also seems to bind ATP. This Chloroherpeton thalassium (strain ATCC 35110 / GB-78) protein is DNA replication and repair protein RecF.